Here is a 528-residue protein sequence, read N- to C-terminus: uncharacterized protein (528 aa).

6-35 (DYVVVGTGSAGAVVASRLSTDPATTVVALE) lines the FAD pocket. The active-site Proton acceptor is histidine 468.

Belongs to the GMC oxidoreductase family. It depends on FAD as a cofactor.

This is an uncharacterized protein from Mycobacterium bovis (strain ATCC BAA-935 / AF2122/97).